The chain runs to 293 residues: tRNA pseudouridine synthase B (293 aa).

The active-site Nucleophile is aspartate 38.

The protein belongs to the pseudouridine synthase TruB family. Type 1 subfamily.

It carries out the reaction uridine(55) in tRNA = pseudouridine(55) in tRNA. Functionally, responsible for synthesis of pseudouridine from uracil-55 in the psi GC loop of transfer RNAs. This chain is tRNA pseudouridine synthase B, found in Solibacter usitatus (strain Ellin6076).